We begin with the raw amino-acid sequence, 96 residues long: Co-chaperonin GroES 2 (96 aa).

Belongs to the GroES chaperonin family. As to quaternary structure, heptamer of 7 subunits arranged in a ring. Interacts with the chaperonin GroEL.

Its subcellular location is the cytoplasm. Its function is as follows. Together with the chaperonin GroEL, plays an essential role in assisting protein folding. The GroEL-GroES system forms a nano-cage that allows encapsulation of the non-native substrate proteins and provides a physical environment optimized to promote and accelerate protein folding. GroES binds to the apical surface of the GroEL ring, thereby capping the opening of the GroEL channel. This is Co-chaperonin GroES 2 from Vibrio cholerae serotype O1 (strain ATCC 39315 / El Tor Inaba N16961).